Consider the following 659-residue polypeptide: Cysteine-rich receptor-like protein kinase 18 (659 aa).

An N-terminal signal peptide occupies residues 1–27 (MATKSCELVLCFFVFFVISFSAISVSA). Gnk2-homologous domains lie at 28–131 (QTCD…NRPF) and 137–250 (MDPL…VYPF). Residues 28–287 (QTCDNTTGTF…KNDSRISGGK (260 aa)) lie on the Extracellular side of the membrane. 9 N-linked (GlcNAc...) asparagine glycosylation sites follow: N32, N57, N152, N162, N179, N180, N197, N275, and N279. Residues 288-308 (IAAIVVVTVVTIILVVLGFVI) form a helical membrane-spanning segment. Residues 309-659 (SNRRKQKQEM…EATITDVNPR (351 aa)) are Cytoplasmic-facing. Residues 339-611 (FSERNKLGKG…PTMSTIHQML (273 aa)) form the Protein kinase domain. Residues 345-353 (LGKGGFGEV) and K367 each bind ATP. Residue Y412 is modified to Phosphotyrosine. Catalysis depends on D464, which acts as the Proton acceptor. S468 bears the Phosphoserine mark. T504 is modified (phosphothreonine). At Y512 the chain carries Phosphotyrosine.

This sequence belongs to the protein kinase superfamily. Ser/Thr protein kinase family. CRK subfamily.

The protein resides in the membrane. The enzyme catalyses L-seryl-[protein] + ATP = O-phospho-L-seryl-[protein] + ADP + H(+). It catalyses the reaction L-threonyl-[protein] + ATP = O-phospho-L-threonyl-[protein] + ADP + H(+). The protein is Cysteine-rich receptor-like protein kinase 18 (CRK18) of Arabidopsis thaliana (Mouse-ear cress).